The primary structure comprises 429 residues: Ribosomal RNA small subunit methyltransferase B (429 aa).

Residues 254-260, Asp-277, Asp-303, and Asp-322 each bind S-adenosyl-L-methionine; that span reads CAAPGGK. The active-site Nucleophile is the Cys-375. The interval 397–419 is disordered; that stretch reads ALSETGTPDQPGQQNLPGGEEGD. Polar residues predominate over residues 400–412; the sequence is ETGTPDQPGQQNL.

It belongs to the class I-like SAM-binding methyltransferase superfamily. RsmB/NOP family.

Its subcellular location is the cytoplasm. The catalysed reaction is cytidine(967) in 16S rRNA + S-adenosyl-L-methionine = 5-methylcytidine(967) in 16S rRNA + S-adenosyl-L-homocysteine + H(+). Functionally, specifically methylates the cytosine at position 967 (m5C967) of 16S rRNA. The protein is Ribosomal RNA small subunit methyltransferase B of Salmonella typhi.